The primary structure comprises 398 residues: Phytoene synthase, chloroplastic (398 aa).

It belongs to the phytoene/squalene synthase family. Monomer.

The protein resides in the plastid. Its subcellular location is the chloroplast. The catalysed reaction is 2 (2E,6E,10E)-geranylgeranyl diphosphate = 15-cis-phytoene + 2 diphosphate. It functions in the pathway carotenoid biosynthesis; phytoene biosynthesis; all-trans-phytoene from geranylgeranyl diphosphate: step 1/1. Functionally, catalyzes the reaction from prephytoene diphosphate to phytoene. This Daucus carota (Wild carrot) protein is Phytoene synthase, chloroplastic (PSY).